We begin with the raw amino-acid sequence, 177 residues long: LOB domain-containing protein 33 (177 aa).

Positions 6-108 (SSCGACKFLR…EEIEFLGSQM (103 aa)) constitute an LOB domain.

It belongs to the LOB domain-containing protein family. Expressed in roots.

In Arabidopsis thaliana (Mouse-ear cress), this protein is LOB domain-containing protein 33 (LBD33).